We begin with the raw amino-acid sequence, 186 residues long: Putative inactive recombination-promoting nuclease-like protein YjiQ (186 aa).

This sequence belongs to the Rpn/YhgA-like nuclease family.

Functionally, this pseudogene is the C-terminal fragment of low activity DNA endonuclease RpnD which probably yields 3'-hydroxyl ends. The intact protein can be seen in this entry (AC B7NGZ6). Expression of the repaired protein increases the frequency of recA-independent recombination, but also decreases viability probably via DNA damage; in a RecA strain expression has no effect on viability but does induce the SOS repair response. May play a role in horizontal gene transfer. This Escherichia coli (strain K12) protein is Putative inactive recombination-promoting nuclease-like protein YjiQ (yjiQ).